Here is a 66-residue protein sequence, read N- to C-terminus: Antimicrobial peptide Eval967 (66 aa).

Positions 1-22 are cleaved as a signal peptide; that stretch reads MKFSALLPVFFLLLAVIDYCQA. L36 is subject to Leucine amide. The propeptide occupies 37–66; it reads GKRDVKTQKYVDIKRRDLDLDDMLSKLFED.

Belongs to the non-disulfide-bridged peptide (NDBP) superfamily. Short antimicrobial peptide (group 4) family. As to expression, expressed by the venom gland.

It is found in the secreted. Probable antimicrobial peptide. Has no inhibitory activity against herpes simplex virus type 1 (HSV-1). The protein is Antimicrobial peptide Eval967 of Euscorpiops validus (Scorpion).